The following is a 521-amino-acid chain: Leucine-rich repeat-containing protein 24 (521 aa).

An N-terminal signal peptide occupies residues 1 to 23 (MALRAPTLLLLLLGLLLLPLLPG). One can recognise an LRRNT domain in the interval 24-58 (LPPRATGCPAACRCYSATVECGALRLRVVPPGIPP). 6 LRR repeats span residues 59-80 (GTQT…SLAP), 83-104 (ALRH…AFRA), 107-128 (RLLE…AFVG), 131-152 (QLRV…TFLH), 155-176 (RLQE…ALAG), and 179-200 (SLAL…ALQP). N91 carries N-linked (GlcNAc...) asparagine glycosylation. Residues 212-267 (NPWRCDCALHWLGSWIKEGGRRLLSSRDKKITCAEPPRLALQSLLEVSGGSLICIP) enclose the LRRCT domain. An Ig-like C2-type domain is found at 268 to 371 (PSVNVEPPEF…ARVPFHLLVN (104 aa)). C289 and C353 are joined by a disulfide. The interval 306–330 (QPRDGKPQAQAQLEGGAPGLGGHGT) is disordered. Residues N342 and N371 are each glycosylated (N-linked (GlcNAc...) asparagine). Positions 374 to 395 (RQQSQQLPDPQAPATRPVGHEP) are disordered. A helical transmembrane segment spans residues 414-434 (AITAAIALLALTALLLAAMIC).

The protein resides in the membrane. In Mus musculus (Mouse), this protein is Leucine-rich repeat-containing protein 24 (Lrrc24).